A 502-amino-acid polypeptide reads, in one-letter code: High affinity nitrate transporter 2.5 (502 aa).

A run of 12 helical transmembrane segments spans residues 51–71 (WFQF…LPVI), 87–107 (IASV…CDLF), 111–131 (LASA…AGIK), 133–153 (PIGF…FVST), 172–192 (IAAG…PIVF), 208–228 (IAFF…LLFG), 264–284 (WITA…DNII), 300–320 (GIIA…GGIF), 334–354 (LWAW…LGQI), 361–381 (IIVM…TFGV), 393–413 (VSGM…LIFF), and 423–443 (GITL…LIYF). The disordered stretch occupies residues 477-502 (LHIGSQKFAETSISERGRATTTHPQT).

This sequence belongs to the major facilitator superfamily. Nitrate/nitrite porter (TC 2.A.1.8) family. In terms of assembly, oligomeric molecular complex with NRT3.1. Expressed in roots, shoots and seeds. Expressed in leaves. Expressed in root hair zone of the primary root and the lateral roots, but not in the lateral root tip or in older parts of the roots. Detected mainly in the epidermis and the cortex. Expressed in shoots only in higher-order veins.

The protein resides in the cell membrane. Its function is as follows. Nitrate transporter involved in the constitutive high-affinity transport system (cHATS) under long-term N starvation conditions. Predominantly expressed in roots of nitrate-deprived plants as a 150 kDa molecular complex with NRT3.1 representing the major contributor to cHATS influx. The principal role of this cHATS is to enable roots previously deprived of nitrate to absorb this ion and initiate induction of nitrate-inducible genes. Not involved in transfer of nitrate from roots to shoots. Contributes to phloem loading of nitrate in shoots during N starvation, but not required for growth and nitrate uptake in young plants. Required for the nitrate uptake-independent plant growth promotion and lateral root response to the rhizospheric Phyllobacterium. Might be involved in the transfer of nitrate from stored pools to cytoplasm. The chain is High affinity nitrate transporter 2.5 (NRT2.5) from Arabidopsis thaliana (Mouse-ear cress).